We begin with the raw amino-acid sequence, 233 residues long: 7-cyano-7-deazaguanine synthase (233 aa).

An ATP-binding site is contributed by 7–17; sequence CSGGLDSVSLA. The Zn(2+) site is built by C185, C193, C196, and C199.

Belongs to the QueC family. It depends on Zn(2+) as a cofactor.

The enzyme catalyses 7-carboxy-7-deazaguanine + NH4(+) + ATP = 7-cyano-7-deazaguanine + ADP + phosphate + H2O + H(+). It functions in the pathway purine metabolism; 7-cyano-7-deazaguanine biosynthesis. Functionally, catalyzes the ATP-dependent conversion of 7-carboxy-7-deazaguanine (CDG) to 7-cyano-7-deazaguanine (preQ(0)). This is 7-cyano-7-deazaguanine synthase from Paracoccus denitrificans (strain Pd 1222).